Here is a 126-residue protein sequence, read N- to C-terminus: Ribosome-binding factor A (126 aa).

It belongs to the RbfA family. Monomer. Binds 30S ribosomal subunits, but not 50S ribosomal subunits or 70S ribosomes.

The protein resides in the cytoplasm. In terms of biological role, one of several proteins that assist in the late maturation steps of the functional core of the 30S ribosomal subunit. Associates with free 30S ribosomal subunits (but not with 30S subunits that are part of 70S ribosomes or polysomes). Required for efficient processing of 16S rRNA. May interact with the 5'-terminal helix region of 16S rRNA. In Thermosipho africanus (strain TCF52B), this protein is Ribosome-binding factor A.